The chain runs to 441 residues: Xaa-Pro aminopeptidase (441 aa).

Mn(2+)-binding residues include Asp261, Asp272, His355, Glu384, and Glu407.

It belongs to the peptidase M24B family. Homotetramer. Requires Mn(2+) as cofactor.

It is found in the cytoplasm. The catalysed reaction is Release of any N-terminal amino acid, including proline, that is linked to proline, even from a dipeptide or tripeptide.. In Escherichia coli (strain K12), this protein is Xaa-Pro aminopeptidase (pepP).